The chain runs to 226 residues: PtdIns3K complex I subunit atg38 (226 aa).

Position 2 is an N-acetylserine (S2). Coiled coils occupy residues 52–85 (DVTQAIDLLKQDITAKIQELELLIEKQSSEENNI) and 182–209 (FKEYGMKIDEITKENKKLANEIGRLRER).

This sequence belongs to the ATG38 family. In terms of assembly, homodimer. Component of the autophagy-specific VPS34 PI3-kinase complex I composed of VPS15, VPS30, VPS34, ATG14 and an ATG38 homodimer. Interacts directly with ATG14 and VPS34.

It localises to the cytoplasm. It is found in the preautophagosomal structure membrane. In terms of biological role, autophagy-related protein required for cytoplasm to vacuole transport (Cvt) and autophagy as a part of the autophagy-specific VPS34 PI3-kinase complex I. This complex is essential to recruit the ATG8-phosphatidylinositol conjugate and the ATG12-ATG5 conjugate to the pre-autophagosomal structure. ATG38 is required for the integrity of the active PI3-kinase complex I by maintaining an association between VPS15-VPS34 and ATG14-VPS30 subcomplexes. In Saccharomyces cerevisiae (strain ATCC 204508 / S288c) (Baker's yeast), this protein is PtdIns3K complex I subunit atg38.